A 246-amino-acid polypeptide reads, in one-letter code: Flagellar L-ring protein (246 aa).

Residues 1–20 form the signal peptide; the sequence is MMQKCLSPKTLIAALVVLSA. Residue Cys-21 is the site of N-palmitoyl cysteine attachment. Cys-21 carries the S-diacylglycerol cysteine lipid modification.

This sequence belongs to the FlgH family. As to quaternary structure, the basal body constitutes a major portion of the flagellar organelle and consists of four rings (L,P,S, and M) mounted on a central rod.

The protein localises to the cell outer membrane. Its subcellular location is the bacterial flagellum basal body. Functionally, assembles around the rod to form the L-ring and probably protects the motor/basal body from shearing forces during rotation. This chain is Flagellar L-ring protein, found in Ruegeria pomeroyi (strain ATCC 700808 / DSM 15171 / DSS-3) (Silicibacter pomeroyi).